We begin with the raw amino-acid sequence, 610 residues long: Preterminal protein (610 aa).

Residues 288–379 (TLRSGTQTGL…ESFSDDVGLS (92 aa)) form a disordered region. A Nuclear localization signal motif is present at residues 328-337 (SLPIRRRRRR). The span at 331-340 (IRRRRRRGTR) shows a compositional bias: basic residues. Residues 341 to 350 (RQVEREDSVR) show a composition bias toward basic and acidic residues. Ser549 bears the O-(5'-phospho-DNA)-serine mark.

It belongs to the adenoviridae terminal protein family. Heterodimer with the polymerase; this heterodimer binds to bp 9 to 18 of the genome. Interacts with host POU2F1; POU2F1 binds to the auxiliary sequences in the inverted terminal repeats and tethers the pTP-POL heterodimer to the origin DNA thereby participating in the assembly of the pre-initiation complex (POL-TP-DBP-NFIA-POU2F1). Post-translationally, preterminal protein is used to replicate viral genome, upon genomic encapsidation it is processed first into iTP and finally into TP by adenovirus protease.

It is found in the host nucleus matrix. In terms of biological role, protein covalently bound to the viral DNA that acts as a primer for viral genomic replication by DNA strand displacement. Assembles on the viral origin of replication in an initiation complex with viral polymerase, DBP, host NFIA and host POU2F1/OCT1. During initiation, the polymerase covalently couples the first dCTP with Ser-580 of pTP. The terminal protein stimulates the template activity over 20 fold compared to protein-free templates. Neo-synthesized viral genomes are linked to two preterminal proteins, one for each 5' end. These new genomes are encapsidated in the nucleus, and during capsid maturation by viral protease, preterminal protein is first cleaved into intermediary (iTP), then into mature TP. May play a role in host nuclear matrix localization of genomic DNA. The protein is Preterminal protein of Snake adenovirus serotype 1 (SnAdV-1).